The chain runs to 69 residues: Large ribosomal subunit protein bL28 (69 aa).

Belongs to the bacterial ribosomal protein bL28 family.

This is Large ribosomal subunit protein bL28 from Aquifex aeolicus (strain VF5).